The sequence spans 89 residues: Putative acyl-CoA-binding protein (89 aa).

Positions Val3–Leu88 constitute an ACB domain. An acyl-CoA-binding positions include Lys15, Tyr30 to Lys34, Lys52, Lys56, and Tyr75.

Belongs to the ACBP family.

Functionally, binds medium- and long-chain acyl-CoA esters with very high affinity and may function as an intracellular carrier of acyl-CoA esters. The chain is Putative acyl-CoA-binding protein from Hypsibius exemplaris (Freshwater tardigrade).